We begin with the raw amino-acid sequence, 488 residues long: Thiamine transporter 2 (488 aa).

Residues 1-8 lie on the Cytoplasmic side of the membrane; the sequence is MDSSCRTP. The helical transmembrane segment at 9 to 29 threads the bilayer; that stretch reads PSNSWVYPTVILCLFGFFSMF. At 30 to 54 the chain is on the extracellular side; it reads RPSEAFLIPFLSEPSKNLTSPEMTN. An N-linked (GlcNAc...) asparagine glycan is attached at N46. The helical transmembrane segment at 55-75 threads the bilayer; it reads EILPVWTYSYLATLPPVFVLT. Topologically, residues 76–82 are cytoplasmic; it reads DYLRYKP. The helical transmembrane segment at 83–103 threads the bilayer; it reads VIMLHVVAFATSYLFLLFGQG. Over 104-111 the chain is Extracellular; it reads VMLMQTAE. The helical transmembrane segment at 112–132 threads the bilayer; sequence FFFGVVSATEIAYFAYIYSMV. Topologically, residues 133–145 are cytoplasmic; sequence SPEHYQKVSSYCR. The helical transmembrane segment at 146-166 threads the bilayer; the sequence is SITLVAYTAGSVLAQLLVSLT. Topologically, residues 167–172 are extracellular; sequence NLPYSS. A helical membrane pass occupies residues 173–193; that stretch reads LFYISLACVSVAFFFSLFLPM. Over 194-276 the chain is Cytoplasmic; that stretch reads PKKSMFFHAK…YSSKHLVYWS (83 aa). The helical transmembrane segment at 277–297 threads the bilayer; the sequence is LWWAFATAGYNQILNYVQVLW. Residues 298–310 are Extracellular-facing; it reads EHKAPSQDSSIYN. Residues 311-331 traverse the membrane as a helical segment; the sequence is GAVEAIATFGGALASFSVGYL. The Cytoplasmic segment spans residues 332-335; sequence KVNW. Residues 336–356 form a helical membrane-spanning segment; the sequence is DLLGELGLAVFSAVIAGSLFL. Residues 357-369 are Extracellular-facing; the sequence is MNYSRSIWVCYAG. N-linked (GlcNAc...) asparagine glycosylation occurs at N358. The chain crosses the membrane as a helical span at residues 370–390; sequence YLLVKSSYSFLITIAVFQIAV. Over 391 to 399 the chain is Cytoplasmic; sequence NLSLERYAL. The chain crosses the membrane as a helical span at residues 400 to 420; it reads VFGIDTFIALVIQTIMTMIVV. Over 421-428 the chain is Extracellular; the sequence is DQRGLQLP. The chain crosses the membrane as a helical span at residues 429 to 449; the sequence is VTTQFLVYGSYFAVIAGVFLM. Residues 450–488 are Cytoplasmic-facing; sequence RSIYILCSAKCRKEVQNLATTRSPNEPHPQEPSNVSTKF. Residues 469 to 488 form a disordered region; it reads TTRSPNEPHPQEPSNVSTKF.

Belongs to the reduced folate carrier (RFC) transporter (TC 2.A.48) family. High expression in kidney, brain, lung and small intestine. Detected in pancreatic acinar cells (at protein level). Also expressed strongly in pancreatic islet cells.

It is found in the membrane. It carries out the reaction thiamine(out) + H(+)(in) = thiamine(in) + H(+)(out). High-affinity transporter for the intake of thiamine. Unlike the human ortholog, lacks H(+)-dependent pyridoxine transport activity due to an absence of seven critical amino-acids required for pyridoxine transport. This chain is Thiamine transporter 2 (Slc19a3), found in Mus musculus (Mouse).